Reading from the N-terminus, the 478-residue chain is Probable cytosolic Fe-S cluster assembly factor CPIJ010948 (478 aa).

Residues Cys23, Cys69, Cys72, Cys75, Cys189, Cys245, Cys396, and Cys400 each coordinate [4Fe-4S] cluster.

It belongs to the NARF family.

Component of the cytosolic iron-sulfur (Fe/S) protein assembly machinery. Required for maturation of extramitochondrial Fe/S proteins. The sequence is that of Probable cytosolic Fe-S cluster assembly factor CPIJ010948 from Culex quinquefasciatus (Southern house mosquito).